Consider the following 177-residue polypeptide: Alkyl hydroperoxide reductase AhpD (177 aa).

The active-site Proton donor is the Cys131. An intrachain disulfide couples Cys131 to Cys134. Cys134 serves as the catalytic Cysteine sulfenic acid (-SOH) intermediate.

Belongs to the AhpD family. In terms of assembly, homotrimer.

The enzyme catalyses N(6)-[(R)-dihydrolipoyl]-L-lysyl-[lipoyl-carrier protein] + a hydroperoxide = N(6)-[(R)-lipoyl]-L-lysyl-[lipoyl-carrier protein] + an alcohol + H2O. Functionally, antioxidant protein with alkyl hydroperoxidase activity. Required for the reduction of the AhpC active site cysteine residues and for the regeneration of the AhpC enzyme activity. The chain is Alkyl hydroperoxide reductase AhpD from Streptomyces avermitilis (strain ATCC 31267 / DSM 46492 / JCM 5070 / NBRC 14893 / NCIMB 12804 / NRRL 8165 / MA-4680).